The following is a 280-amino-acid chain: uncharacterized protein (280 aa).

The next 3 helical transmembrane spans lie at 10-29 (IQQNGILTAVITGIVALLFN), 164-186 (FVFVRWFKETLAFFVGASAFAFI), and 209-228 (IFGLSCSALYIFWIIHYFLL).

It localises to the cell membrane. This is an uncharacterized protein from Bacillus subtilis (strain 168).